Here is a 353-residue protein sequence, read N- to C-terminus: Peroxisome assembly protein 12-A (353 aa).

The Peroxisomal matrix portion of the chain corresponds to 1-19 (MAERGAHITTTSASDDRPS). A helical membrane pass occupies residues 20-47 (IFEVVAQESLMAAARPALHHIVKVLAES). The Cytoplasmic segment spans residues 48 to 51 (NPSR). A helical membrane pass occupies residues 52–76 (YGTLWRWFDELYTLLDWLLQQHYLS). Over 77-104 (WASASFSENFYGLKRITLGKEVGQRNLP) the chain is Peroxisomal matrix. A helical membrane pass occupies residues 105–134 (RKEYWKSLLLLVLIPYLRVKLEKIVNRLRE). The Cytoplasmic segment spans residues 135–139 (EQDYS). A helical membrane pass occupies residues 140–178 (IQNPTSFHKRCYKAILASYPFVKLGWEAWFLFYQLRYIL). Over 179–243 (WNGKNHSPLL…LGAVALSVSS (65 aa)) the chain is Peroxisomal matrix. The chain crosses the membrane as a helical span at residues 244-271 (SLSLGVFFLQFLDWWYSAENQETLKSLN). Residues 272-353 (NLPVPPPPIH…HLIKLYTPDG (82 aa)) lie on the Cytoplasmic side of the membrane. Residues cysteine 298, cysteine 301, cysteine 319, and cysteine 322 each coordinate Zn(2+). Residues 298–337 (CPLCRKVRVNDTALGTSGYVFCYRCAYYYVKTHQRCPVSG) form an RING-type; degenerate zinc finger.

Belongs to the pex2/pex10/pex12 family. As to quaternary structure, component of the PEX2-PEX10-PEX12 retrotranslocation channel.

The protein resides in the peroxisome membrane. Its pathway is protein modification; protein ubiquitination. Functionally, component of a retrotranslocation channel required for peroxisome organization by mediating export of the PEX5 receptor from peroxisomes to the cytosol, thereby promoting PEX5 recycling. The retrotranslocation channel is composed of PEX2, PEX10 and PEX12; each subunit contributing transmembrane segments that coassemble into an open channel that specifically allows the passage of PEX5 through the peroxisomal membrane. PEX12 also regulates PEX5 recycling by activating the E3 ubiquitin-protein ligase activity of PEX10. When PEX5 recycling is compromised, PEX12 stimulates PEX10-mediated polyubiquitination of PEX5, leading to its subsequent degradation. This is Peroxisome assembly protein 12-A from Xenopus laevis (African clawed frog).